The chain runs to 380 residues: F-box/kelch-repeat protein At3g18720 (380 aa).

One can recognise an F-box domain in the interval 47-94 (LWDKQIPTDLLQEILSRLGLKANIHASLVCKTWLKEAVSVRKFQSRPW). 2 Kelch repeats span residues 190–233 (CVIS…INRC) and 234–279 (IFSN…LVRQ).

The sequence is that of F-box/kelch-repeat protein At3g18720 from Arabidopsis thaliana (Mouse-ear cress).